The chain runs to 442 residues: MEPQNIKPHTPELSRNTALFERAKKLIPGGVNSPVRAFKAVGGTPRFVQRAQGAYFWDADDQRYIDYIGSWGPMILGHGHPAVLASVQKALLDGFSYGAPTEREVELAEELVRLVPSLEMVRLVSSGTEAAMSAIRLARGATGRSKIIKFEGCYHGHADALLVKAGSGLATFGNPTSAGVPPEVVQHTLVLEYNHLAQLEEAFALHGSAIACLMIEPIAGNMNFVRASIPFMQRCRELCTQYGALLVFDEVMTGFRVALGGAQSVYAKSIPGFKPDMTVLGKVIGGGMPLAAFGGTRAVMEQLAPLGPVYQAGTLSGNPVATACGLATLREIQKPGFYEALGERTRGLVAGLTQAANKAGVPFCGDSEGGMFGFFLLGQLPQNYATVMTTDGPAFNRFFHAMLASGVYYAPALYEAGFVSSAHSAADIEATVDAAAKFFAGA.

Residue Lys282 is modified to N6-(pyridoxal phosphate)lysine.

It belongs to the class-III pyridoxal-phosphate-dependent aminotransferase family. HemL subfamily. As to quaternary structure, homodimer. Pyridoxal 5'-phosphate is required as a cofactor.

It is found in the cytoplasm. The catalysed reaction is (S)-4-amino-5-oxopentanoate = 5-aminolevulinate. It functions in the pathway porphyrin-containing compound metabolism; protoporphyrin-IX biosynthesis; 5-aminolevulinate from L-glutamyl-tRNA(Glu): step 2/2. This is Glutamate-1-semialdehyde 2,1-aminomutase from Polaromonas sp. (strain JS666 / ATCC BAA-500).